The sequence spans 475 residues: tRNA-2-methylthio-N(6)-dimethylallyladenosine synthase (475 aa).

An MTTase N-terminal domain is found at 2 to 119 (AKLHITTWGC…LPEMINKIRG (118 aa)). [4Fe-4S] cluster is bound by residues cysteine 11, cysteine 48, cysteine 82, cysteine 156, cysteine 160, and cysteine 163. In terms of domain architecture, Radical SAM core spans 142 to 374 (RAEGPTAFVS…QQRINHQAMQ (233 aa)). Positions 377–440 (RAMLGTEQRV…TNSLRGDVVR (64 aa)) constitute a TRAM domain.

Belongs to the methylthiotransferase family. MiaB subfamily. As to quaternary structure, monomer. [4Fe-4S] cluster is required as a cofactor.

Its subcellular location is the cytoplasm. The catalysed reaction is N(6)-dimethylallyladenosine(37) in tRNA + (sulfur carrier)-SH + AH2 + 2 S-adenosyl-L-methionine = 2-methylsulfanyl-N(6)-dimethylallyladenosine(37) in tRNA + (sulfur carrier)-H + 5'-deoxyadenosine + L-methionine + A + S-adenosyl-L-homocysteine + 2 H(+). Catalyzes the methylthiolation of N6-(dimethylallyl)adenosine (i(6)A), leading to the formation of 2-methylthio-N6-(dimethylallyl)adenosine (ms(2)i(6)A) at position 37 in tRNAs that read codons beginning with uridine. In Actinobacillus pleuropneumoniae serotype 5b (strain L20), this protein is tRNA-2-methylthio-N(6)-dimethylallyladenosine synthase.